The chain runs to 505 residues: DNA repair protein RadA (505 aa).

The segment at 10–27 adopts a C4-type zinc-finger fold; it reads CSACGADHAQWFGRCPKC. 107-114 contacts ATP; that stretch reads GDPGIGKS. A RadA KNRFG motif motif is present at residues 281–285; it reads KNRFG. The interval 380 to 505 is lon-protease-like; sequence DAYLSVAGGL…KIEEDLGKKD (126 aa). Residues 485 to 505 form a disordered region; sequence NTTDQGNGSEAKIEEDLGKKD. Basic and acidic residues predominate over residues 495–505; it reads AKIEEDLGKKD.

It belongs to the RecA family. RadA subfamily.

Functionally, DNA-dependent ATPase involved in processing of recombination intermediates, plays a role in repairing DNA breaks. Stimulates the branch migration of RecA-mediated strand transfer reactions, allowing the 3' invading strand to extend heteroduplex DNA faster. Binds ssDNA in the presence of ADP but not other nucleotides, has ATPase activity that is stimulated by ssDNA and various branched DNA structures, but inhibited by SSB. Does not have RecA's homology-searching function. The chain is DNA repair protein RadA from Synechocystis sp. (strain ATCC 27184 / PCC 6803 / Kazusa).